Here is a 684-residue protein sequence, read N- to C-terminus: SLVVAAAAASPYSGSHDFSGFQRDEPDGVPTAQKQHDINFLLHKLYEPLHEANLKALEDSFDPLTHTANMPDAGVAVNKLMQEVKTQHLEERHHWFSVFNATQREEALLLVKVLLQCQDWPTAIGNAVYFRKMMNEETYVYALYTAIKHSPLTKHVVLPPLYEIMPHFFTSSEVIQQAYRAKMIGQPGKFNMNFTGTQNNPEHKIAYFGEDIGLSTHYINWHIEYPFWWNETFGYQIERRGENYFWVHHQLVNRFEAERISNHLQKIEKLHWERNLHEGFDPHTSYKNGEHFPFRHDDIHIEDVDKVAEVRDMIVMENRIRDAIAHGYVIDKEGNKVDINNEHGIDILGEIIESCVYNPYNEYYGSLHNMGHMMLGHQGDPHAKYYDTPSVLEHYETTLRDPAFYKLHKYIDDLFRKHKDHLKPYSRKELLFPGIAINNIHIDGPLETYFEDYEYSLMNAMDDKEEMKWEDNMEISAIIPRLRHKDFSFKVNIMNNNDENKLATIRIFAWPHRDVNGVIMPFNEGRWHAIELDKFWKYLAPGENEVTRKCDESSVTVPDVPSLKSLHEQAEAAIAGISELNLEEFVSATGLPNRLLIPKGNAAGVEFKLVVAVTDGEADSVNDEINLTTKFHHYGHHGVYLDKKSHGYPLDRRVPDERLFHEIPNFGETIVKVFNHNEHVHRHE.

An N-terminal signal peptide occupies residues S1–R23. Positions A7 to A32 are disordered. Residues N100, N193, N230, and N626 are each glycosylated (N-linked (GlcNAc...) asparagine).

This sequence belongs to the tyrosinase family. Hemocyanin subfamily. Hexamer. As to expression, strongly expressed in ovaries. Also expressed in heart. Not detected in hepatopancreas, gills, connective tissue or muscle.

Its function is as follows. Does not function as a hemocyanin. The chain is Pseudohemocyanin-1 from Homarus americanus (American lobster).